The chain runs to 213 residues: MSMSYQLKTKKLACQRGDNVLFTDFNFVWNSGDFVQIEGHNGIGKTSLLRILIGLAQQREGEVFWNGIPIQTQRETFQYDLLYLGHHSGIKPELTAWENLKFYQQMSACELGEDKLWQVLETVGLLGREDIPAAQLSAGQQRRIALARLWLSKAPLWILDEPFTAIDKHGVQVLTTLFEQHATQGGIVIFTSHQDVQSRLLKKVRLENYKFTE.

In terms of domain architecture, ABC transporter spans 7 to 213; that stretch reads LKTKKLACQR…VRLENYKFTE (207 aa). Residue 39–46 participates in ATP binding; that stretch reads GHNGIGKT.

It belongs to the ABC transporter superfamily. CcmA exporter (TC 3.A.1.107) family. In terms of assembly, the complex is composed of two ATP-binding proteins (CcmA) and two transmembrane proteins (CcmB).

The protein localises to the cell inner membrane. The enzyme catalyses heme b(in) + ATP + H2O = heme b(out) + ADP + phosphate + H(+). In terms of biological role, part of the ABC transporter complex CcmAB involved in the biogenesis of c-type cytochromes; once thought to export heme, this seems not to be the case, but its exact role is uncertain. Responsible for energy coupling to the transport system. The chain is Cytochrome c biogenesis ATP-binding export protein CcmA from Pasteurella multocida (strain Pm70).